A 350-amino-acid polypeptide reads, in one-letter code: L-threonine 3-dehydrogenase (350 aa).

Cys-42 is a Zn(2+) binding site. Active-site charge relay system residues include Thr-44 and His-47. The Zn(2+) site is built by His-67, Glu-68, Cys-97, Cys-100, Cys-103, and Cys-111. Residues Leu-179, Glu-199, Arg-204, 266 to 268 (LGL), and 291 to 292 (IT) contribute to the NAD(+) site.

The protein belongs to the zinc-containing alcohol dehydrogenase family. Homotetramer. Requires Zn(2+) as cofactor.

The protein resides in the cytoplasm. It carries out the reaction L-threonine + NAD(+) = (2S)-2-amino-3-oxobutanoate + NADH + H(+). It functions in the pathway amino-acid degradation; L-threonine degradation via oxydo-reductase pathway; glycine from L-threonine: step 1/2. Its function is as follows. Catalyzes the NAD(+)-dependent oxidation of L-threonine to 2-amino-3-ketobutyrate. To a lesser extent, also catalyzes the oxidation of L-serine. The chain is L-threonine 3-dehydrogenase from Thermococcus kodakarensis (strain ATCC BAA-918 / JCM 12380 / KOD1) (Pyrococcus kodakaraensis (strain KOD1)).